The chain runs to 152 residues: UPF0225 protein YchJ (152 aa).

It belongs to the UPF0225 family.

The polypeptide is UPF0225 protein YchJ (Escherichia coli O139:H28 (strain E24377A / ETEC)).